The sequence spans 60 residues: Cecropin-B type 1 (60 aa).

Positions 1–24 (MNFNKLFALVLLIGLVLLTGQTEA) are cleaved as a signal peptide. An Isoleucine amide modification is found at Ile-58.

The protein belongs to the cecropin family.

It localises to the secreted. In terms of biological role, cecropins have lytic and antibacterial activity against several Gram-positive and Gram-negative bacteria. This chain is Cecropin-B type 1 (CECB1), found in Aedes albopictus (Asian tiger mosquito).